The following is a 194-amino-acid chain: Putative manganese efflux pump MntP (194 aa).

6 helical membrane passes run 2-22 (TPGAIAILSLSMSTDAFAAAV), 40-60 (FVFGVIEAITPLIGWSLGLVA), 67-87 (VDHWIAFGLLTIVGGKMIWEA), 107-129 (ALIATAVGTSIDAAAVGVGLAFI), 133-155 (IWVIAASIGFTTFVCTTVGMLIG), and 168-188 (LIGGLALVGLGAMILIQHTGV).

The protein belongs to the MntP (TC 9.B.29) family.

It is found in the cell inner membrane. Probably functions as a manganese efflux pump. In Rhodopseudomonas palustris (strain BisA53), this protein is Putative manganese efflux pump MntP.